Here is a 380-residue protein sequence, read N- to C-terminus: Cytochrome b (380 aa).

A run of 4 helical transmembrane segments spans residues 33-53 (FGSL…FLAM), 77-98 (WLIR…FIHV), 113-133 (WNIG…GYVL), and 178-198 (FFAF…VHLL). Heme b is bound by residues His83 and His97. Residues His182 and His196 each coordinate heme b. Position 201 (His201) interacts with a ubiquinone. The next 4 helical transmembrane spans lie at 226–246 (IKDL…VLFF), 288–308 (LGGV…PLLN), 320–340 (ITQA…WIGG), and 347–367 (FTLI…IFMP).

Belongs to the cytochrome b family. The cytochrome bc1 complex contains 11 subunits: 3 respiratory subunits (MT-CYB, CYC1 and UQCRFS1), 2 core proteins (UQCRC1 and UQCRC2) and 6 low-molecular weight proteins (UQCRH/QCR6, UQCRB/QCR7, UQCRQ/QCR8, UQCR10/QCR9, UQCR11/QCR10 and a cleavage product of UQCRFS1). This cytochrome bc1 complex then forms a dimer. Requires heme b as cofactor.

The protein localises to the mitochondrion inner membrane. Component of the ubiquinol-cytochrome c reductase complex (complex III or cytochrome b-c1 complex) that is part of the mitochondrial respiratory chain. The b-c1 complex mediates electron transfer from ubiquinol to cytochrome c. Contributes to the generation of a proton gradient across the mitochondrial membrane that is then used for ATP synthesis. The protein is Cytochrome b (MT-CYB) of Rhipidomys wetzeli (Wetzel's climbing mouse).